We begin with the raw amino-acid sequence, 122 residues long: Large ribosomal subunit protein uL14 (122 aa).

It belongs to the universal ribosomal protein uL14 family. Part of the 50S ribosomal subunit. Forms a cluster with proteins L3 and L19. In the 70S ribosome, L14 and L19 interact and together make contacts with the 16S rRNA in bridges B5 and B8.

Binds to 23S rRNA. Forms part of two intersubunit bridges in the 70S ribosome. The chain is Large ribosomal subunit protein uL14 from Mesomycoplasma hyopneumoniae (strain 232) (Mycoplasma hyopneumoniae).